The chain runs to 339 residues: D-erythrose-4-phosphate dehydrogenase (339 aa).

Residue 12–13 participates in NAD(+) binding; that stretch reads RI. Substrate is bound by residues 154-156, arginine 200, 213-214, and arginine 236; these read SCT and TK. Cysteine 155 acts as the Nucleophile in catalysis. Residue asparagine 318 coordinates NAD(+).

It belongs to the glyceraldehyde-3-phosphate dehydrogenase family. Epd subfamily. Homotetramer.

Its subcellular location is the cytoplasm. It catalyses the reaction D-erythrose 4-phosphate + NAD(+) + H2O = 4-phospho-D-erythronate + NADH + 2 H(+). It participates in cofactor biosynthesis; pyridoxine 5'-phosphate biosynthesis; pyridoxine 5'-phosphate from D-erythrose 4-phosphate: step 1/5. Its function is as follows. Catalyzes the NAD-dependent conversion of D-erythrose 4-phosphate to 4-phosphoerythronate. This is D-erythrose-4-phosphate dehydrogenase from Photorhabdus laumondii subsp. laumondii (strain DSM 15139 / CIP 105565 / TT01) (Photorhabdus luminescens subsp. laumondii).